We begin with the raw amino-acid sequence, 395 residues long: Methylmalonyl-CoA decarboxylase subunit beta (395 aa).

9 consecutive transmembrane segments (helical) span residues 17-37 (LNMGSIIMMLVACVFLYLAIA), 43-63 (LLLVPISFGILLTNLPFAGMM), 103-123 (GIFPPLIFLGVGAMTDFGPLI), 128-148 (SLLLGAAAQFGIFVTFFGAIA), 180-200 (PHLMGPIAVAAYSYMALVPII), 230-250 (IIFPIVVTILVSLIVPPAATL), 278-298 (INIITIFLGVTVGATATAEAF), 304-324 (LAILGLGIVAFGIGTGSGVLL), and 374-394 (GPNVAGVIGSAVSAGVLLSLF).

The protein belongs to the GcdB/MmdB/OadB family. As to quaternary structure, the methylmalonyl-CoA decarboxylase is composed of four subunits: the carboxyltransferase alpha subunit (MmdA), the tunnel beta subunit (MmdB), the biotin-containing gamma subunit (MmdC) and the delta subunit (MmdD). In terms of processing, the N-terminus is blocked.

The protein localises to the cell membrane. It carries out the reaction (S)-methylmalonyl-CoA + Na(+)(in) + H(+)(out) = propanoyl-CoA + Na(+)(out) + CO2. Functionally, tunnel subunit of the sodium ion pump methylmalonyl-CoA decarboxylase, which converts the chemical energy of a decarboxylation reaction into an electrochemical gradient of Na(+) ions across the cytoplasmic membrane, thereby creating a sodium ion motive force that is used for ATP synthesis. The beta subunit catalyzes the decarboxylation of the carboxybiotin carrier protein and the coupled export of Na(+) ions. This chain is Methylmalonyl-CoA decarboxylase subunit beta, found in Propionigenium modestum.